A 450-amino-acid chain; its full sequence is Phosphoglucosamine mutase (450 aa).

Ser-101 acts as the Phosphoserine intermediate in catalysis. Mg(2+) contacts are provided by Ser-101, Asp-241, Asp-243, and Asp-245. The residue at position 101 (Ser-101) is a Phosphoserine.

This sequence belongs to the phosphohexose mutase family. Mg(2+) is required as a cofactor. Activated by phosphorylation.

The enzyme catalyses alpha-D-glucosamine 1-phosphate = D-glucosamine 6-phosphate. In terms of biological role, catalyzes the conversion of glucosamine-6-phosphate to glucosamine-1-phosphate. This chain is Phosphoglucosamine mutase, found in Listeria monocytogenes serovar 1/2a (strain ATCC BAA-679 / EGD-e).